Reading from the N-terminus, the 313-residue chain is Tagatose-6-phosphate kinase (313 aa).

It belongs to the carbohydrate kinase PfkB family. LacC subfamily.

It catalyses the reaction D-tagatofuranose 6-phosphate + ATP = D-tagatofuranose 1,6-bisphosphate + ADP + H(+). It participates in carbohydrate metabolism; D-tagatose 6-phosphate degradation; D-glyceraldehyde 3-phosphate and glycerone phosphate from D-tagatose 6-phosphate: step 1/2. The sequence is that of Tagatose-6-phosphate kinase from Enterococcus faecalis (strain ATCC 700802 / V583).